A 1031-amino-acid chain; its full sequence is Protein draper (1031 aa).

Residues 1–16 (MLPVILIACLAQLVLA) form the signal peptide. Residues 17 to 800 (QADLKDLDGP…DQSENSSRAS (784 aa)) lie on the Extracellular side of the membrane. Residues 25–100 (GPNICKRREL…YIASAGECVP (76 aa)) form the EMI domain. Cystine bridges form between Cys-29-Cys-88, Cys-55-Cys-62, Cys-87-Cys-98, Cys-102-Cys-111, Cys-106-Cys-117, and Cys-119-Cys-128. Asn-73 carries an N-linked (GlcNAc...) asparagine glycan. 6 EGF-like domains span residues 99 to 129 (VPHC…PACD), 137 to 172 (YGRN…ARCA), 180 to 215 (FGAN…PLCD), 223 to 258 (HGAQ…DVCA), 266 to 301 (YGPG…ERCF), and 309 to 344 (YGFN…AKCA). Asn-140 is a glycosylation site (N-linked (GlcNAc...) asparagine). 3 disulfides stabilise this stretch: Cys-141-Cys-153, Cys-147-Cys-160, and Cys-162-Cys-171. Asn-183 carries an N-linked (GlcNAc...) asparagine glycan. Intrachain disulfides connect Cys-184–Cys-196, Cys-190–Cys-203, Cys-205–Cys-214, Cys-227–Cys-239, Cys-233–Cys-246, Cys-248–Cys-257, Cys-270–Cys-282, Cys-276–Cys-289, and Cys-291–Cys-300. Residue Asn-312 is glycosylated (N-linked (GlcNAc...) asparagine). 3 disulfides stabilise this stretch: Cys-313–Cys-325, Cys-319–Cys-332, and Cys-334–Cys-343. Asn-329 carries N-linked (GlcNAc...) asparagine glycosylation. Residue Asn-358 is glycosylated (N-linked (GlcNAc...) asparagine). EGF-like domains lie at 398–433 (YGPN…PTCE) and 484–519 (FGQD…ERCE). Disulfide bonds link Cys-402–Cys-414, Cys-408–Cys-421, Cys-423–Cys-432, Cys-488–Cys-500, Cys-494–Cys-507, and Cys-509–Cys-518. N-linked (GlcNAc...) asparagine glycosylation occurs at Asn-418. A glycan (N-linked (GlcNAc...) asparagine) is linked at Asn-504. Asn-540, Asn-584, and Asn-585 each carry an N-linked (GlcNAc...) asparagine glycan. In terms of domain architecture, EGF-like 9 spans 572–607 (YGENCDKVCRCLNNSSCDPDSGNCICSAGWTGADCA). 3 cysteine pairs are disulfide-bonded: Cys-576–Cys-588, Cys-582–Cys-595, and Cys-597–Cys-606. Asn-630 is a glycosylation site (N-linked (GlcNAc...) asparagine). The EGF-like 10 domain maps to 660–695 (YGPGCKLKCNCEHGGECNHVTGQCQCLPGWTGSNCN). Cystine bridges form between Cys-664-Cys-676, Cys-670-Cys-683, and Cys-685-Cys-694. 2 N-linked (GlcNAc...) asparagine glycosylation sites follow: Asn-695 and Asn-795. A helical membrane pass occupies residues 801–821 (VALTLVLMTLFACIIFAVFIY). Residues 822 to 1031 (YRRRVSNLKT…SPSSSPKFLK (210 aa)) are Cytoplasmic-facing. The span at 940–954 (KEGYKDPDEYDHLDY) shows a compositional bias: basic and acidic residues. 2 disordered regions span residues 940 to 964 (KEGY…QKPH) and 989 to 1031 (TVLL…KFLK). Polar residues predominate over residues 1009–1031 (DNTNTNLDNVSTASPSSSPKFLK).

It belongs to the MEGF family. In terms of assembly, interacts (via the cytoplasmic domain) with shark; this is required for the recruitment of drpr and glial cells to severed axons and for the phagocytosis of axonal debris by glial cells following axon injury. Interacts with ced-6. Interacts with csw; this results in dephosphorylation of drpr isoform A which is required for the inhibition of glial cell engulfment of axonal debris produced following axonal injury. Post-translationally, phosphorylated on tyrosine residues. Phosphorylation is induced by binding to prtp. It is also induced by binding to the membrane phospholipid phosphatidylserine. Phosphorylation may be mediated directly or indirectly by Src42a and is required for interaction with shark. Dephosphorylated by csw which is required for the inhibition of glial cell engulfment of axonal debris produced following axonal injury. Expressed in adult head (at protein level). Expressed in glia, macrophages and ectoderm (at protein level). Detected in glia around the mushroom body dorsal lobe and in glial processes infiltrating the medial lobe (at protein level). Expressed in adult brain glia including antennal lobe glia (at protein level). Expressed in the larval fat body (at protein level). Expressed in the ovary (at protein level). Isoform B: Predominant isoform in adult glia.

It localises to the cell membrane. The protein localises to the cell projection. The protein resides in the axon. Its subcellular location is the cytoplasm. It is found in the postsynaptic cell membrane. It localises to the cell cortex. The protein localises to the phagocytic cup. The protein resides in the cytoplasmic vesicle. Its subcellular location is the phagosome. In terms of biological role, receptor which is involved in the phagocytosis of a variety of cells including apoptotic cells, severed and pruned axons, degenerating dendrites, salivary gland cells, germline cells and bacteria. Binds to the ligand prtp which relocates from the endoplasmic reticulum to the cell surface during apoptosis. Ligand-binding may promote tyrosine phosphorylation mediated by Src42a, interaction with shark and subsequent activation of phagocytosis. Also binds to the membrane phospholipid phosphatidylserine which is exposed on the surface of apoptotic cells. Required for the phagocytosis of apoptotic cells by macrophages. Also required for the phagocytosis of apoptotic neurons by glial cells in the embryonic nervous system. Acts downstream of NimC4/simu in the glial phagocytosis of apoptotic neurons. Plays a role in the glial engulfment of larval axons as part of programmed axon pruning during metamorphosis. Also mediates glial cell clearance of severed axons following axonal injury. Required for the engulfment of degenerating dendrites by epidermal cells. Required in the ovary for the engulfment and subsequent processing of dying germline cells by follicular epithelial cells through activation of the JNK/bsk pathway. Plays a role in neuromuscular junction development by mediating the clearance of presynaptic debris and immature boutons which are shed by growing synapses. Required for larval salivary gland cell death which occurs following a rise in steroid levels after puparium formation. Also involved in bacterial phagocytosis. Required for hemocyte phagocytosis of the Gram-positive bacterium S.aureus. Lipoteichoic acid, synthesized by the S.aureus lipoteichoic acid synthase ltaS, acts as a ligand for drpr in this process. Together with Src42a and shark, promotes the migration of macrophages to sites of wounding as part of a signaling cascade where Scr42a detects production of hydrogen peroxide at wound sites which triggers phosphorylation of drpr and subsequent recruitment and activation of shark. Also required for macrophage priming which occurs following phagocytosis of apoptotic cells and ensures that macrophages develop a form of molecular memory that allows them to later mount an inflammatory response to tissue damage and bacterial infection. Is also an essential factor in the regulation of muscle development and myogenesis, and as a consequence is required for normal locomotion. Likely to control the balance between skeletal muscle satellite cells proliferation and differentiation through regulation of the notch signaling pathway. Functionally, promotes engulfment of axonal debris by glial cells following axonal injury. Its function is as follows. Potently inhibits glial cell engulfment of axonal debris produced following axonal injury. The sequence is that of Protein draper from Drosophila melanogaster (Fruit fly).